A 55-amino-acid polypeptide reads, in one-letter code: Large ribosomal subunit protein bL33 (55 aa).

The protein belongs to the bacterial ribosomal protein bL33 family.

This Methylocella silvestris (strain DSM 15510 / CIP 108128 / LMG 27833 / NCIMB 13906 / BL2) protein is Large ribosomal subunit protein bL33.